Consider the following 121-residue polypeptide: Peptidyl-tRNA hydrolase (121 aa).

This sequence belongs to the PTH2 family.

Its subcellular location is the cytoplasm. The enzyme catalyses an N-acyl-L-alpha-aminoacyl-tRNA + H2O = an N-acyl-L-amino acid + a tRNA + H(+). In terms of biological role, the natural substrate for this enzyme may be peptidyl-tRNAs which drop off the ribosome during protein synthesis. This chain is Peptidyl-tRNA hydrolase, found in Sulfurisphaera tokodaii (strain DSM 16993 / JCM 10545 / NBRC 100140 / 7) (Sulfolobus tokodaii).